The primary structure comprises 291 residues: Phosphate import ATP-binding protein PstB (291 aa).

The tract at residues 1–21 is disordered; it reads MANKQIIDKNDDLQAHTDRND. Residues 45-286 form the ABC transporter domain; the sequence is YSTKNLDLWY…PSDKQTEDYI (242 aa). 77–84 serves as a coordination point for ATP; sequence GPSGCGKS.

Belongs to the ABC transporter superfamily. Phosphate importer (TC 3.A.1.7) family. As to quaternary structure, the complex is composed of two ATP-binding proteins (PstB), two transmembrane proteins (PstC and PstA) and a solute-binding protein (PstS).

Its subcellular location is the cell membrane. The catalysed reaction is phosphate(out) + ATP + H2O = ADP + 2 phosphate(in) + H(+). Part of the ABC transporter complex PstSACB involved in phosphate import. Responsible for energy coupling to the transport system. The sequence is that of Phosphate import ATP-binding protein PstB from Staphylococcus saprophyticus subsp. saprophyticus (strain ATCC 15305 / DSM 20229 / NCIMB 8711 / NCTC 7292 / S-41).